The following is a 157-amino-acid chain: Nucleoside deoxyribosyltransferase (157 aa).

Glu-98 acts as the Nucleophile in catalysis.

This sequence belongs to the nucleoside deoxyribosyltransferase family. Homohexamer.

It carries out the reaction 2-deoxy-D-ribosyl-base(1) + base(2) = 2-deoxy-D-ribosyl-base(2) + base(1).. It functions in the pathway nucleotide metabolism; nucleotide salvage pathway. Catalyzes the cleavage of the glycosidic bond of 2'-deoxyribonucleosides and the transfer of the deoxyribosyl moiety to an acceptor purine or pyrimidine base. The polypeptide is Nucleoside deoxyribosyltransferase (ntd) (Lactobacillus leichmannii).